Consider the following 152-residue polypeptide: Superoxide dismutase [Cu-Zn] (152 aa).

Cu cation contacts are provided by H45, H47, and H62. An intrachain disulfide couples C56 to C145. Residues H62, H70, H79, and D82 each coordinate Zn(2+). H119 is a Cu cation binding site.

This sequence belongs to the Cu-Zn superoxide dismutase family. As to quaternary structure, homodimer. It depends on Cu cation as a cofactor. Requires Zn(2+) as cofactor.

It is found in the cytoplasm. It carries out the reaction 2 superoxide + 2 H(+) = H2O2 + O2. In terms of biological role, destroys radicals which are normally produced within the cells and which are toxic to biological systems. This is Superoxide dismutase [Cu-Zn] (SODCC) from Spinacia oleracea (Spinach).